The following is a 414-amino-acid chain: Glutamyl-tRNA reductase (414 aa).

Residues 47-50, S106, 111-113, and Q117 each bind substrate; these read TCNR and EAQ. C48 functions as the Nucleophile in the catalytic mechanism. 185-190 is an NADP(+) binding site; the sequence is GAGRTG.

The protein belongs to the glutamyl-tRNA reductase family. Homodimer.

The enzyme catalyses (S)-4-amino-5-oxopentanoate + tRNA(Glu) + NADP(+) = L-glutamyl-tRNA(Glu) + NADPH + H(+). It functions in the pathway porphyrin-containing compound metabolism; protoporphyrin-IX biosynthesis; 5-aminolevulinate from L-glutamyl-tRNA(Glu): step 1/2. In terms of biological role, catalyzes the NADPH-dependent reduction of glutamyl-tRNA(Glu) to glutamate 1-semialdehyde (GSA). The polypeptide is Glutamyl-tRNA reductase (Herpetosiphon aurantiacus (strain ATCC 23779 / DSM 785 / 114-95)).